A 78-amino-acid polypeptide reads, in one-letter code: Small ribosomal subunit protein bS18 (78 aa).

Belongs to the bacterial ribosomal protein bS18 family. Part of the 30S ribosomal subunit. Forms a tight heterodimer with protein bS6.

Binds as a heterodimer with protein bS6 to the central domain of the 16S rRNA, where it helps stabilize the platform of the 30S subunit. The polypeptide is Small ribosomal subunit protein bS18 (Lacticaseibacillus casei (strain BL23) (Lactobacillus casei)).